The chain runs to 324 residues: MDTLTRFLPEHLQQNQLPEALGGVLLSVVSACTEINAKVRLGALAGVLGMTGTGNIQGEDQKKLDVIANNIMIDTLKANPAVAGLASEEEDTFVSAGENGRYLVLFDPLDGSSNIDVNISVGTIFSILEKPEGALATESFLQTGRQQLAAGYVLYGPQTQLVFTFGHGVYMFTLNAENEFVLTKEKPKVPESTKEFAINMSNRRHWLPPVQQYIDELLAGETGTRGKNYNMRWVASMVAEIHRILMRGGVFMYPQDKRDPAKPGKLRLMYEANPMSLILEQAGASASNAYQAMLDIQPENLHQRVAVFMGSSEEVDYLNRLHSK.

Residues glutamate 88, aspartate 107, leucine 109, and aspartate 110 each coordinate Mg(2+). Substrate is bound by residues 110 to 113 (DGSS), asparagine 199, and lysine 265. Glutamate 271 contacts Mg(2+).

It belongs to the FBPase class 1 family. In terms of assembly, homotetramer. The cofactor is Mg(2+).

The protein resides in the cytoplasm. It carries out the reaction beta-D-fructose 1,6-bisphosphate + H2O = beta-D-fructose 6-phosphate + phosphate. It functions in the pathway carbohydrate biosynthesis; gluconeogenesis. The sequence is that of Fructose-1,6-bisphosphatase class 1 from Neisseria meningitidis serogroup C (strain 053442).